A 236-amino-acid polypeptide reads, in one-letter code: Ubiquinone biosynthesis O-methyltransferase (236 aa).

The S-adenosyl-L-methionine site is built by Arg-39, Gly-59, Asp-80, and Met-124.

Belongs to the methyltransferase superfamily. UbiG/COQ3 family.

It catalyses the reaction a 3-demethylubiquinol + S-adenosyl-L-methionine = a ubiquinol + S-adenosyl-L-homocysteine + H(+). The enzyme catalyses a 3-(all-trans-polyprenyl)benzene-1,2-diol + S-adenosyl-L-methionine = a 2-methoxy-6-(all-trans-polyprenyl)phenol + S-adenosyl-L-homocysteine + H(+). It functions in the pathway cofactor biosynthesis; ubiquinone biosynthesis. In terms of biological role, O-methyltransferase that catalyzes the 2 O-methylation steps in the ubiquinone biosynthetic pathway. The chain is Ubiquinone biosynthesis O-methyltransferase from Pseudoalteromonas translucida (strain TAC 125).